We begin with the raw amino-acid sequence, 159 residues long: MANLVKTFLLGELVKGMGVTLKNFFARKDTIYFPEEKTPQSVRFRGLHAQRRYPNGEERCIACKLCEAVCPAMAINIESEEREDGTRRTKRYDIDLTKCIFCGFCEEACPTDAIVETHIFEYHGEKKGDLHMTKPILLAIGDKYEAEIAKRKAADAPYR.

4Fe-4S ferredoxin-type domains lie at 50-80 (QRRYPNGEERCIACKLCEAVCPAMAINIESE) and 90-119 (KRYDIDLTKCIFCGFCEEACPTDAIVETHI). 8 residues coordinate [4Fe-4S] cluster: C60, C63, C66, C70, C99, C102, C105, and C109.

This sequence belongs to the complex I 23 kDa subunit family. In terms of assembly, NDH-1 is composed of 14 different subunits. Subunits NuoA, H, J, K, L, M, N constitute the membrane sector of the complex. The cofactor is [4Fe-4S] cluster.

Its subcellular location is the cell inner membrane. It catalyses the reaction a quinone + NADH + 5 H(+)(in) = a quinol + NAD(+) + 4 H(+)(out). In terms of biological role, NDH-1 shuttles electrons from NADH, via FMN and iron-sulfur (Fe-S) centers, to quinones in the respiratory chain. The immediate electron acceptor for the enzyme in this species is believed to be ubiquinone. Couples the redox reaction to proton translocation (for every two electrons transferred, four hydrogen ions are translocated across the cytoplasmic membrane), and thus conserves the redox energy in a proton gradient. The protein is NADH-quinone oxidoreductase subunit I of Neisseria meningitidis serogroup A / serotype 4A (strain DSM 15465 / Z2491).